The chain runs to 130 residues: Histone H2A type 3 (130 aa).

The segment at 1-22 is disordered; it reads MSGRGKQGGKARAKAKSRSSRA. At Ser-2 the chain carries N-acetylserine. Ser-2 is modified (phosphoserine; by RPS6KA5). Arg-4 carries the citrulline; alternate modification. The residue at position 4 (Arg-4) is a Symmetric dimethylarginine; by PRMT5; alternate. Lys-6 bears the N6-(2-hydroxyisobutyryl)lysine mark. The segment covering 7–19 has biased composition (basic residues); sequence QGGKARAKAKSRS. Lys-10 is subject to N6-(2-hydroxyisobutyryl)lysine; alternate. An N6-(beta-hydroxybutyryl)lysine; alternate mark is found at Lys-10 and Lys-14. The residue at position 10 (Lys-10) is an N6-lactoyllysine; alternate. An N6-succinyllysine; alternate modification is found at Lys-10. Lys-14 participates in a covalent cross-link: Glycyl lysine isopeptide (Lys-Gly) (interchain with G-Cter in ubiquitin); alternate. Residue Lys-16 forms a Glycyl lysine isopeptide (Lys-Gly) (interchain with G-Cter in ubiquitin) linkage. An N6-(2-hydroxyisobutyryl)lysine; alternate modification is found at Lys-37. N6-(beta-hydroxybutyryl)lysine; alternate is present on Lys-37. Lys-37 carries the N6-crotonyllysine; alternate modification. N6-(2-hydroxyisobutyryl)lysine occurs at positions 75 and 76. Lys-96 is subject to N6-(2-hydroxyisobutyryl)lysine; alternate. The residue at position 96 (Lys-96) is an N6-(beta-hydroxybutyryl)lysine; alternate. An N6-succinyllysine; alternate modification is found at Lys-96. Residue Lys-96 is modified to N6-glutaryllysine; alternate. Gln-105 carries the N5-methylglutamine modification. Residue Lys-119 is modified to N6-(2-hydroxyisobutyryl)lysine; alternate. Lys-119 carries the post-translational modification N6-(beta-hydroxybutyryl)lysine; alternate. N6-crotonyllysine; alternate is present on residues Lys-119 and Lys-120. Residues Lys-119 and Lys-120 each carry the N6-glutaryllysine; alternate modification. A Glycyl lysine isopeptide (Lys-Gly) (interchain with G-Cter in ubiquitin); alternate cross-link involves residue Lys-120. Thr-121 is modified (phosphothreonine; by DCAF1). At Lys-126 the chain carries N6-crotonyllysine; alternate. Residue Lys-126 is modified to N6-glutaryllysine; alternate.

This sequence belongs to the histone H2A family. As to quaternary structure, the nucleosome is a histone octamer containing two molecules each of H2A, H2B, H3 and H4 assembled in one H3-H4 heterotetramer and two H2A-H2B heterodimers. The octamer wraps approximately 147 bp of DNA. Deiminated on Arg-4 in granulocytes upon calcium entry. In terms of processing, monoubiquitination of Lys-120 (H2AK119Ub) by RING1, TRIM37 and RNF2/RING2 complex gives a specific tag for epigenetic transcriptional repression and participates in X chromosome inactivation of female mammals. It is involved in the initiation of both imprinted and random X inactivation. Ubiquitinated H2A is enriched in inactive X chromosome chromatin. Ubiquitination of H2A functions downstream of methylation of 'Lys-27' of histone H3 (H3K27me). H2AK119Ub by RNF2/RING2 can also be induced by ultraviolet and may be involved in DNA repair. Monoubiquitination of Lys-120 (H2AK119Ub) by TRIM37 may promote transformation of cells in a number of breast cancers. Following DNA double-strand breaks (DSBs), it is ubiquitinated through 'Lys-63' linkage of ubiquitin moieties by the E2 ligase UBE2N and the E3 ligases RNF8 and RNF168, leading to the recruitment of repair proteins to sites of DNA damage. Ubiquitination at Lys-14 and Lys-16 (H2AK13Ub and H2AK15Ub, respectively) in response to DNA damage is initiated by RNF168 that mediates monoubiquitination at these 2 sites, and 'Lys-63'-linked ubiquitin are then conjugated to monoubiquitin; RNF8 is able to extend 'Lys-63'-linked ubiquitin chains in vitro. Deubiquitinated by USP51 at Lys-14 and Lys-16 (H2AK13Ub and H2AK15Ub, respectively) after damaged DNA is repaired. H2AK119Ub and ionizing radiation-induced 'Lys-63'-linked ubiquitination (H2AK13Ub and H2AK15Ub) are distinct events. Post-translationally, phosphorylation on Ser-2 (H2AS1ph) is enhanced during mitosis. Phosphorylation on Ser-2 by RPS6KA5/MSK1 directly represses transcription. Acetylation of H3 inhibits Ser-2 phosphorylation by RPS6KA5/MSK1. Phosphorylation at Thr-121 (H2AT120ph) by DCAF1 is present in the regulatory region of many tumor suppresor genes and down-regulates their transcription. Glutamine methylation at Gln-105 (H2AQ104me) by FBL is specifically dedicated to polymerase I. It is present at 35S ribosomal DNA locus and impairs binding of the FACT complex. In terms of processing, symmetric dimethylation on Arg-4 by the PRDM1/PRMT5 complex may play a crucial role in the germ-cell lineage. Post-translationally, crotonylation (Kcr) is specifically present in male germ cells and marks testis-specific genes in post-meiotic cells, including X-linked genes that escape sex chromosome inactivation in haploid cells. Crotonylation marks active promoters and enhancers and confers resistance to transcriptional repressors. It is also associated with post-meiotically activated genes on autosomes. Lactylated in macrophages by EP300/P300 by using lactoyl-CoA directly derived from endogenous or exogenous lactate, leading to stimulates gene transcription.

The protein resides in the nucleus. Its subcellular location is the chromosome. In terms of biological role, core component of nucleosome. Nucleosomes wrap and compact DNA into chromatin, limiting DNA accessibility to the cellular machineries which require DNA as a template. Histones thereby play a central role in transcription regulation, DNA repair, DNA replication and chromosomal stability. DNA accessibility is regulated via a complex set of post-translational modifications of histones, also called histone code, and nucleosome remodeling. The chain is Histone H2A type 3 from Homo sapiens (Human).